Reading from the N-terminus, the 204-residue chain is Small ribosomal subunit protein uS3 (204 aa).

A KH type-2 domain is found at 37–105; that stretch reads IRSYINESFK…NVEVNVVGVK (69 aa).

Belongs to the universal ribosomal protein uS3 family. In terms of assembly, part of the 30S ribosomal subunit. Forms a tight complex with proteins S10 and S14.

Binds the lower part of the 30S subunit head. Binds mRNA in the 70S ribosome, positioning it for translation. This Wolbachia pipientis wMel protein is Small ribosomal subunit protein uS3.